The sequence spans 156 residues: ATP synthase subunit b (156 aa).

A helical membrane pass occupies residues 12 to 32 (VAFFIFVLFCMKYVWPPVIAA).

Belongs to the ATPase B chain family. F-type ATPases have 2 components, F(1) - the catalytic core - and F(0) - the membrane proton channel. F(1) has five subunits: alpha(3), beta(3), gamma(1), delta(1), epsilon(1). F(0) has three main subunits: a(1), b(2) and c(10-14). The alpha and beta chains form an alternating ring which encloses part of the gamma chain. F(1) is attached to F(0) by a central stalk formed by the gamma and epsilon chains, while a peripheral stalk is formed by the delta and b chains.

It localises to the cell inner membrane. In terms of biological role, f(1)F(0) ATP synthase produces ATP from ADP in the presence of a proton or sodium gradient. F-type ATPases consist of two structural domains, F(1) containing the extramembraneous catalytic core and F(0) containing the membrane proton channel, linked together by a central stalk and a peripheral stalk. During catalysis, ATP synthesis in the catalytic domain of F(1) is coupled via a rotary mechanism of the central stalk subunits to proton translocation. Component of the F(0) channel, it forms part of the peripheral stalk, linking F(1) to F(0). This chain is ATP synthase subunit b, found in Pseudomonas syringae pv. tomato (strain ATCC BAA-871 / DC3000).